A 263-amino-acid chain; its full sequence is Protein M1425_2021 (263 aa).

Belongs to the CinA family.

The chain is Protein M1425_2021 from Saccharolobus islandicus (strain M.14.25 / Kamchatka #1) (Sulfolobus islandicus).